The primary structure comprises 623 residues: MAFEALTGINGDLITRSWSASKQAYLTERYHKEEAGAVVIFAFQPSFSEKDFFDPDNKSSFGEIKLNRVQFPCMRKIGKGDVATVNEAFLKNLEAVIDPRTSFQASVEMAVRSRKQIVFTGHSSGGATAILATVWYLEKYFIRNPNVYLEPRCVTFGAPLVGDSIFSHALGREKWSRFFVNFVTRFDIVPRITLARKASVEETLPHVLAQLDPRNSSVQESEQRITEFYTSVMRDTSTVANQAVCELTGSAEAILETLSSFLELSPYRPAGTFVFSTEKRLVAVNNSDAILQMLFYTCQASDEQEWSLIPFRSIRDHHSYEELVQSMGMKLFNHLDGENSIESSLNDLGVSTRGRQYVQAALEEEKKRVENQKKIIQVIQQERFLKKLAWIEDEYKPKCQAHKNGYYDSFKVSNEENDFKANVKRAELAGVFDEVLGLLKKCQLPDEFEGDIDWIKLATRYRRLVEPLDIANYHRHLKNEDTGPYMKRGRPTRYIYAQRGYEHHILKPNGMIAEDVFWNKVNGLNLGLQLEEIQETLKNSGSECGSCFWAEVEELKGKPYEEVEVRVKTLEGMLREWITAGEVDEKEIFLEGSTFRKWWITLPKNHKSHSPLRDYMMDEITDT.

An N-acetylalanine modification is found at A2. S123 serves as the catalytic Nucleophile. Catalysis depends on charge relay system residues D187 and H317.

In terms of assembly, homodimer. Interacts with RPS4, RPS6, SNC1, SRFR1, AvrRps4 and HopA1. Interacts with PAD4 (via N-terminus). Interacts with SAG101. EDS1-SAG101 and EDS1-PAD4 form separate complexes in pathogen-unchallenged cells.

It is found in the nucleus. The protein localises to the cytoplasm. The protein resides in the microsome. Positive regulator of basal resistance and of effector-triggered immunity specifically mediated by TIR-NB-LRR resistance proteins. Disruption by bacterial effector of EDS1-TIR-NB-LRR resistance protein interactions constitutes the first step in resistance activation. Triggers early plant defenses and hypersensitive response independently of PAD4, and then recruits PAD4 to potentiate plant defenses through the accumulation of salicylic acid. Nuclear localization is essential for basal and TIR-NB-LRR-conditioned immunity and for reprogramming defense gene expression, while cytoplasmic EDS1 is required to induce a complete immune response. Heterodimerization with PAD4 or SGA101 is necessary for TNL-mediated effector-triggered immunity. Contributes to nonhost resistance against E.amylovora. Has no direct lipase activity. This is Protein EDS1L from Arabidopsis thaliana (Mouse-ear cress).